The following is a 100-amino-acid chain: Integration host factor subunit alpha (100 aa).

Belongs to the bacterial histone-like protein family. Heterodimer of an alpha and a beta chain.

Its function is as follows. This protein is one of the two subunits of integration host factor, a specific DNA-binding protein that functions in genetic recombination as well as in transcriptional and translational control. The sequence is that of Integration host factor subunit alpha from Buchnera aphidicola subsp. Schizaphis graminum (strain Sg).